A 391-amino-acid chain; its full sequence is Origin recognition complex subunit 2 (391 aa).

The interval 1–43 is disordered; that stretch reads MEEYTDSGEDKNVYSDDDNDYFTASTQNNRTSKNTDSSPLDPK. Polar residues predominate over residues 22-38; it reads FTASTQNNRTSKNTDSS.

It belongs to the ORC2 family. In terms of assembly, ORC is composed of six subunits.

The protein resides in the nucleus. Functionally, component of the origin recognition complex (ORC) that binds origins of replication. DNA-binding is ATP-dependent, however specific DNA sequences that define origins of replication have not been identified so far. ORC is required to assemble the pre-replication complex necessary to initiate DNA replication. The chain is Origin recognition complex subunit 2 (orcB) from Dictyostelium discoideum (Social amoeba).